The primary structure comprises 96 residues: MAKYEILYIIRPNIEEEAKNALVARFDSILTNNGATIVESKDWEKRRLAYEINDFREGLYHIVNLEATDAVALNEFDRLSKINGDILRHMIVKLDA.

It belongs to the bacterial ribosomal protein bS6 family.

Its function is as follows. Binds together with bS18 to 16S ribosomal RNA. This is Small ribosomal subunit protein bS6 from Streptococcus equi subsp. zooepidemicus (strain MGCS10565).